The following is a 594-amino-acid chain: Aspartate--tRNA(Asp/Asn) ligase (594 aa).

Residue E175 coordinates L-aspartate. The tract at residues 199–202 is aspartate; the sequence is QLFK. An L-aspartate-binding site is contributed by R221. ATP is bound by residues 221 to 223 and Q230; that span reads RDE. H446 serves as a coordination point for L-aspartate. E492 lines the ATP pocket. R499 provides a ligand contact to L-aspartate. 544-547 contacts ATP; the sequence is GFDR.

It belongs to the class-II aminoacyl-tRNA synthetase family. Type 1 subfamily. As to quaternary structure, homodimer.

The protein localises to the cytoplasm. It carries out the reaction tRNA(Asx) + L-aspartate + ATP = L-aspartyl-tRNA(Asx) + AMP + diphosphate. Aspartyl-tRNA synthetase with relaxed tRNA specificity since it is able to aspartylate not only its cognate tRNA(Asp) but also tRNA(Asn). Reaction proceeds in two steps: L-aspartate is first activated by ATP to form Asp-AMP and then transferred to the acceptor end of tRNA(Asp/Asn). The sequence is that of Aspartate--tRNA(Asp/Asn) ligase from Hydrogenobaculum sp. (strain Y04AAS1).